The following is a 485-amino-acid chain: WAS/WASL-interacting protein family member 3 (485 aa).

A compositionally biased stretch (pro residues) spans 1 to 30 (MPVPPPPPPPLPPPPPPLGAPPPPPPPGPP). The segment at 1 to 485 (MPVPPPPPPP…NSQLSLKALR (485 aa)) is disordered. Short sequence motifs (profilin-binding motif) lie at residues 3 to 8 (VPPPPP), 11 to 16 (LPPPPP), and 20 to 25 (APPPPP). The region spanning 45-62 (GRSALLADIQQGTRLRKV) is the WH2 domain. Position 46 is an asymmetric dimethylarginine (R46). Positions 58–61 (RLRK) match the RLRK motif. A compositionally biased stretch (polar residues) spans 63–78 (TQINDRSAPQIESSKG). The residue at position 150 (S150) is a Phosphoserine. Composition is skewed to pro residues over residues 165-200 (PVPPRPSVPAPPPPTTPPPPPPPPPPPPPPPLPPAS) and 207-243 (VSPPVPPTKGNPSAVPAPIPCVPPLPPPPPTPPPLPP). S208 is subject to Phosphoserine. A compositionally biased stretch (low complexity) spans 244-259 (ASALSEKAVRPQLAPL). 2 stretches are compositionally biased toward pro residues: residues 260–275 (HLPPIPPPLPLLPPYG) and 293–312 (PPAPPPPPPPPPPPPPPPLP). S394 is subject to Phosphoserine. Over residues 396 to 407 (TTELSSKTQQPG) the composition is skewed to polar residues. Positions 417 to 441 (VIDDFESKFTFHSMEDFPPPDEYKP) are enriched in basic and acidic residues. Positions 426 to 450 (TFHSMEDFPPPDEYKPGQKIYPSKV) match the WASP-binding motif motif. A compositionally biased stretch (polar residues) spans 475–485 (RNSQLSLKALR).

Belongs to the verprolin family. In terms of assembly, isoform 1 interacts with WASL (via WH1 domain), and monomeric and filamentous actin. Detected mainly in brain and at lower levels in heart and lung (at protein level). Also detected in testis but not in kidney, liver or spleen.

Its subcellular location is the cytoplasm. In terms of biological role, may have a role in spermatogenesis. May be a regulator of cytoskeletal organization. This is WAS/WASL-interacting protein family member 3 (Wipf3) from Rattus norvegicus (Rat).